The following is a 409-amino-acid chain: Na(+)-translocating NADH-quinone reductase subunit F (409 aa).

The helical transmembrane segment at 5 to 25 (FIFGIIAFTALVLVLAVIILF) threads the bilayer. A 2Fe-2S ferredoxin-type domain is found at 34-128 (GDITISINDD…SMDVELPEEI (95 aa)). Positions 71, 77, 80, and 112 each coordinate [2Fe-2S] cluster. One can recognise an FAD-binding FR-type domain in the interval 131–271 (VKKWECTVIS…SGPFGEFFAK (141 aa)).

Belongs to the NqrF family. As to quaternary structure, composed of six subunits; NqrA, NqrB, NqrC, NqrD, NqrE and NqrF. The cofactor is [2Fe-2S] cluster. Requires FAD as cofactor.

The protein resides in the cell inner membrane. It catalyses the reaction a ubiquinone + n Na(+)(in) + NADH + H(+) = a ubiquinol + n Na(+)(out) + NAD(+). In terms of biological role, NQR complex catalyzes the reduction of ubiquinone-1 to ubiquinol by two successive reactions, coupled with the transport of Na(+) ions from the cytoplasm to the periplasm. The first step is catalyzed by NqrF, which accepts electrons from NADH and reduces ubiquinone-1 to ubisemiquinone by a one-electron transfer pathway. The chain is Na(+)-translocating NADH-quinone reductase subunit F from Haemophilus ducreyi (strain 35000HP / ATCC 700724).